The sequence spans 363 residues: Alanine racemase (363 aa).

Lysine 39 serves as the catalytic Proton acceptor; specific for D-alanine. An N6-(pyridoxal phosphate)lysine modification is found at lysine 39. Position 134 (arginine 134) interacts with substrate. Tyrosine 251 serves as the catalytic Proton acceptor; specific for L-alanine. Methionine 299 contributes to the substrate binding site.

Belongs to the alanine racemase family. The cofactor is pyridoxal 5'-phosphate.

The catalysed reaction is L-alanine = D-alanine. The protein operates within amino-acid biosynthesis; D-alanine biosynthesis; D-alanine from L-alanine: step 1/1. Its function is as follows. Catalyzes the interconversion of L-alanine and D-alanine. May also act on other amino acids. In Thermodesulfovibrio yellowstonii (strain ATCC 51303 / DSM 11347 / YP87), this protein is Alanine racemase (alr).